A 259-amino-acid polypeptide reads, in one-letter code: UPF0246 protein NMB0895 (259 aa).

Belongs to the UPF0246 family.

This chain is UPF0246 protein NMB0895, found in Neisseria meningitidis serogroup B (strain ATCC BAA-335 / MC58).